We begin with the raw amino-acid sequence, 98 residues long: MAKHNGIKKRTRYKLQKTLRTRGMPNVTKVIQNFDEGQKVHLVLDSSVQKGQPHPRFHGKTGTIVGKRGRAWLLEIKDGNATKTVIARPQHLTAQKYN.

The protein belongs to the eukaryotic ribosomal protein eL21 family.

The chain is Large ribosomal subunit protein eL21 from Methanocorpusculum labreanum (strain ATCC 43576 / DSM 4855 / Z).